Here is a 383-residue protein sequence, read N- to C-terminus: ATP phosphoribosyltransferase regulatory subunit (383 aa).

This sequence belongs to the class-II aminoacyl-tRNA synthetase family. HisZ subfamily. Heteromultimer composed of HisG and HisZ subunits.

Its subcellular location is the cytoplasm. It participates in amino-acid biosynthesis; L-histidine biosynthesis; L-histidine from 5-phospho-alpha-D-ribose 1-diphosphate: step 1/9. Its function is as follows. Required for the first step of histidine biosynthesis. May allow the feedback regulation of ATP phosphoribosyltransferase activity by histidine. The sequence is that of ATP phosphoribosyltransferase regulatory subunit from Neisseria gonorrhoeae (strain ATCC 700825 / FA 1090).